Here is a 126-residue protein sequence, read N- to C-terminus: Holo-[acyl-carrier-protein] synthase (126 aa).

Mg(2+)-binding residues include D9 and E58.

It belongs to the P-Pant transferase superfamily. AcpS family. It depends on Mg(2+) as a cofactor.

The protein resides in the cytoplasm. The catalysed reaction is apo-[ACP] + CoA = holo-[ACP] + adenosine 3',5'-bisphosphate + H(+). Transfers the 4'-phosphopantetheine moiety from coenzyme A to a Ser of acyl-carrier-protein. The protein is Holo-[acyl-carrier-protein] synthase of Enterobacter sp. (strain 638).